Reading from the N-terminus, the 188-residue chain is Marginal zone B- and B1-cell-specific protein (188 aa).

The first 20 residues, 1–20 (MRLPLPLLLLFGCRAILGSA), serve as a signal peptide directing secretion. 3 disulfide bridges follow: cysteine 49/cysteine 177, cysteine 52/cysteine 170, and cysteine 94/cysteine 142. Positions 185–188 (REEL) match the Prevents secretion from ER motif.

This sequence belongs to the MZB1 family. As to quaternary structure, part of the ER chaperone complex, a multi-protein complex in the endoplasmic reticulum containing a large number of molecular chaperones which associates with unassembled incompletely folded immunoglobulin heavy chains. Interacts with HSP90B1 and PDIA3 in a calcium-dependent manner. Forms an interchain disulfide bond with IgM monomers. As to expression, expressed predominantly in the spleen and lymph nodes. Abundantly expressed in marginal zone B and B1 cells. High expression in mesenteric adipose tissue (MAT). Expressed also in pancreas, perigonadal adipose tissue (PAT), uterus, subcutaneous adipose tissue, heart, muscle, ovary and liver. Very low expression is detected in brown adipose tissue. In PAT, significantly higher expression in stromal-vascular cell than in adipocytes. Expressed in macrophage RAW 264.7 cell line. Down-regulated in For-knockout female MAT at 5 months (obese state) followed by steep up-regulation at 9 months (prediabetic condition) when mutants progress towards the metabolic syndrome.

The protein localises to the endoplasmic reticulum. Its subcellular location is the endoplasmic reticulum lumen. The protein resides in the secreted. Its function is as follows. Associates with immunoglobulin M (IgM) heavy and light chains and promotes IgM assembly and secretion. May exert its effect by acting as a molecular chaperone or as an oxidoreductase as it displays a low level of oxidoreductase activity. Helps to diversify peripheral B-cell functions by regulating Ca(2+) stores, antibody secretion and integrin activation. Acts as a hormone-regulated adipokine/pro-inflammatory cytokine that is implicated in causing chronic inflammation, affecting cellular expansion and blunting insulin response in adipocytes. May have a role in the onset of insulin resistance. The chain is Marginal zone B- and B1-cell-specific protein (Mzb1) from Mus musculus (Mouse).